The sequence spans 290 residues: Arylamine N-acetyltransferase 2 (290 aa).

Residue Cys68 is the Acyl-thioester intermediate of the active site. Residues Ser103 and Gly104 each contribute to the CoA site. A substrate-binding site is contributed by 106-107; the sequence is IH. Residues His107 and Asp122 contribute to the active site. Tyr208 provides a ligand contact to CoA.

The protein belongs to the arylamine N-acetyltransferase family.

The protein localises to the cytoplasm. It carries out the reaction an arylamine + acetyl-CoA = an N-acetylarylamine + CoA. The catalysed reaction is an N-hydroxyarylamine + acetyl-CoA = an N-acetoxyarylamine + CoA. Its function is as follows. Catalyzes the N- or O-acetylation of various arylamine and heterocyclic amine substrates, and participates in the detoxification of a plethora of hydrazine and arylamine drugs. The chain is Arylamine N-acetyltransferase 2 (Nat2) from Mus musculus (Mouse).